Reading from the N-terminus, the 362-residue chain is tRNA/tmRNA (uracil-C(5))-methyltransferase (362 aa).

5 residues coordinate S-adenosyl-L-methionine: Q186, Y214, N219, E235, and D295. Residue C320 is the Nucleophile of the active site. Catalysis depends on E354, which acts as the Proton acceptor.

The protein belongs to the class I-like SAM-binding methyltransferase superfamily. RNA M5U methyltransferase family. TrmA subfamily.

The enzyme catalyses uridine(54) in tRNA + S-adenosyl-L-methionine = 5-methyluridine(54) in tRNA + S-adenosyl-L-homocysteine + H(+). It catalyses the reaction uridine(341) in tmRNA + S-adenosyl-L-methionine = 5-methyluridine(341) in tmRNA + S-adenosyl-L-homocysteine + H(+). Dual-specificity methyltransferase that catalyzes the formation of 5-methyluridine at position 54 (m5U54) in all tRNAs, and that of position 341 (m5U341) in tmRNA (transfer-mRNA). This is tRNA/tmRNA (uracil-C(5))-methyltransferase from Dechloromonas aromatica (strain RCB).